Here is a 250-residue protein sequence, read N- to C-terminus: uncharacterized protein (250 aa).

To class-3 of adenylyl cyclases.

This is an uncharacterized protein from Mycobacterium tuberculosis (strain ATCC 25618 / H37Rv).